The primary structure comprises 1181 residues: Putative type II restriction enzyme and methyltransferase RM.MjaORFECS2P (1181 aa).

The protein in the C-terminal section; belongs to the N(4)/N(6)-methyltransferase family.

It catalyses the reaction Endonucleolytic cleavage of DNA to give specific double-stranded fragments with terminal 5'-phosphates.. The catalysed reaction is a 2'-deoxyadenosine in DNA + S-adenosyl-L-methionine = an N(6)-methyl-2'-deoxyadenosine in DNA + S-adenosyl-L-homocysteine + H(+). Functionally, probably a G subtype restriction enzyme that recognizes an undetermined sequence and cleaves at an undetermined site. Probably also acts as an alpha subtype methylase, presumably on the same sequence. This Methanocaldococcus jannaschii (strain ATCC 43067 / DSM 2661 / JAL-1 / JCM 10045 / NBRC 100440) (Methanococcus jannaschii) protein is Putative type II restriction enzyme and methyltransferase RM.MjaORFECS2P.